The sequence spans 477 residues: MKTWLMGLYEFFQAYKTVWTEIWKIRHQLDTPDREKDENEFLPAHLELIETPVSKKPRLIAYLIMLFLFLALVISIVSHVEIVATATGKLAFSGRSKEIKPIENALVKEIFVEDGQFVEKDQLLLHLTALGADADQQKTKSSLSLTKLERYRYEILLEAVAADRLPLIELTKDEFKHATEEDKTRIRYLITEQFEAWQKQKYQKELALQRREAEKQTVLANIRKYEGSSRVENERLKDLKKLFNSKSTSKHDVLTQENRHIEAVNELAVYKSRLNEVESDLRQAKEEIHLITQLFRADILEKLKQNVEAEKQLSLELEKNEQRQIASVIRAPVSYVQQLKTHTVGGVVTTAETLMVIAPEDDVLEVTALIQNKDIGFIEVGQDAVIKVETFPYTRYGYLMGKVKNITLEAIEHPQLGLVFNSIISIDRKTLSGKDGKEIELGSGMSVTAEIKTGERSVISYLLSPLEESVSESLRER.

Residues 1-59 are Cytoplasmic-facing; the sequence is MKTWLMGLYEFFQAYKTVWTEIWKIRHQLDTPDREKDENEFLPAHLELIETPVSKKPRL. Residues 60–80 form a helical membrane-spanning segment; it reads IAYLIMLFLFLALVISIVSHV. Residues 81 to 477 are Periplasmic-facing; that stretch reads EIVATATGKL…ESVSESLRER (397 aa).

Belongs to the membrane fusion protein (MFP) (TC 8.A.1) family.

The protein resides in the cell inner membrane. Its function is as follows. Involved in the transport of the toxin RTX-I as well as that of RTX-II. The chain is RTX-I toxin determinant D (apxID) from Actinobacillus pleuropneumoniae (Haemophilus pleuropneumoniae).